Consider the following 185-residue polypeptide: Adenylyl-sulfate kinase (185 aa).

13 to 20 (GLSGAGKT) contacts ATP. Serine 87 functions as the Phosphoserine intermediate in the catalytic mechanism.

It belongs to the APS kinase family.

The catalysed reaction is adenosine 5'-phosphosulfate + ATP = 3'-phosphoadenylyl sulfate + ADP + H(+). The protein operates within sulfur metabolism; hydrogen sulfide biosynthesis; sulfite from sulfate: step 2/3. Catalyzes the synthesis of activated sulfate. The chain is Adenylyl-sulfate kinase from Halothermothrix orenii (strain H 168 / OCM 544 / DSM 9562).